The primary structure comprises 139 residues: Nucleoside diphosphate kinase (139 aa).

Lys-10, Phe-58, Arg-86, Thr-92, Arg-103, and Asn-113 together coordinate ATP. The active-site Pros-phosphohistidine intermediate is His-116.

The protein belongs to the NDK family. Homotetramer. The cofactor is Mg(2+).

Its subcellular location is the cytoplasm. The enzyme catalyses a 2'-deoxyribonucleoside 5'-diphosphate + ATP = a 2'-deoxyribonucleoside 5'-triphosphate + ADP. It carries out the reaction a ribonucleoside 5'-diphosphate + ATP = a ribonucleoside 5'-triphosphate + ADP. Major role in the synthesis of nucleoside triphosphates other than ATP. The ATP gamma phosphate is transferred to the NDP beta phosphate via a ping-pong mechanism, using a phosphorylated active-site intermediate. The sequence is that of Nucleoside diphosphate kinase from Desulfovibrio desulfuricans (strain ATCC 27774 / DSM 6949 / MB).